We begin with the raw amino-acid sequence, 634 residues long: Probable sulfate transporter 3.5 (634 aa).

Over residues 1-12 (MENTITSSTSSP) the composition is skewed to polar residues. The tract at residues 1-25 (MENTITSSTSSPKGRGVNFSTPRGF) is disordered. The Cytoplasmic segment spans residues 1–81 (MENTITSSTS…KYDMQKLKYD (81 aa)). The helical transmembrane segment at 82-102 (VLAGITITSLAVPQGISYAKL) threads the bilayer. Topologically, residues 103–104 (AS) are extracellular. Residues 105–125 (IPPIIGLYSSFVPPFVYAVFG) traverse the membrane as a helical segment. Residues 126–130 (SSNNL) lie on the Cytoplasmic side of the membrane. A helical transmembrane segment spans residues 131-151 (AVGTVAACSLLIAETFGEEMI). Residues 152-158 (KNEPELY) are Extracellular-facing. The chain crosses the membrane as a helical span at residues 159 to 179 (LHLIFTATLITGLFQFAMGFL). Topologically, residues 180 to 195 (RLGILVDFLSHSTITG) are cytoplasmic. The chain crosses the membrane as a helical span at residues 196–216 (FMGGTAIIILLQQLKGIFGLV). Residues 217 to 239 (HFTHKTDVVSVLHSILDNRAEWK) are Extracellular-facing. A helical transmembrane segment spans residues 240–260 (WQSTLAGVCFLVFLQSTRYIK). Topologically, residues 261-265 (QRYPK) are cytoplasmic. The helical transmembrane segment at 266–286 (LFWVSAMGPMVVVVVGCVVAY) threads the bilayer. At 287 to 321 (LVKGTAHGIATVGPLKKGLNPPSIQLLNFDSKYLG) the chain is on the extracellular side. The chain crosses the membrane as a helical span at residues 322–342 (MVFKAGIVTGLIALAEGIAIG). The Cytoplasmic portion of the chain corresponds to 343–358 (RSFAVMKNEQTDGNKE). A helical membrane pass occupies residues 359–379 (MIAFGLMNVIGSFTSCYLTTG). Residues 380 to 395 (PFSKTAVNYNAGTKTP) are Extracellular-facing. A helical membrane pass occupies residues 396–416 (MSNVVMGVCMMLVLLFLAPLF). Residues 417 to 420 (SYTP) are Cytoplasmic-facing. A helical transmembrane segment spans residues 421–441 (LVGLSAIIMSAMLGLINYEEM). Topologically, residues 442-458 (YHLFKVDKFDFLVCMSA) are extracellular. The helical transmembrane segment at 459-479 (FFGVSFLSMDYGLIISVGFSI) threads the bilayer. Residues 480–634 (VRALLYVARP…FNLTTTKPEV (155 aa)) lie on the Cytoplasmic side of the membrane. One can recognise an STAS domain in the interval 508–623 (QYPASEEMLG…LSIDDAVQAC (116 aa)).

It belongs to the SLC26A/SulP transporter (TC 2.A.53) family.

The protein resides in the membrane. Functionally, h(+)/sulfate cotransporter that may play a role in the regulation of sulfate assimilation. This is Probable sulfate transporter 3.5 (SULTR3;5) from Arabidopsis thaliana (Mouse-ear cress).